Consider the following 79-residue polypeptide: Small ribosomal subunit protein bS16 (79 aa).

The protein belongs to the bacterial ribosomal protein bS16 family.

This Desulfovibrio desulfuricans (strain ATCC 27774 / DSM 6949 / MB) protein is Small ribosomal subunit protein bS16.